A 118-amino-acid polypeptide reads, in one-letter code: Large ribosomal subunit protein bL20 (118 aa).

It belongs to the bacterial ribosomal protein bL20 family.

Its function is as follows. Binds directly to 23S ribosomal RNA and is necessary for the in vitro assembly process of the 50S ribosomal subunit. It is not involved in the protein synthesizing functions of that subunit. The polypeptide is Large ribosomal subunit protein bL20 (Tolumonas auensis (strain DSM 9187 / NBRC 110442 / TA 4)).